Here is a 371-residue protein sequence, read N- to C-terminus: Histidinol-phosphate aminotransferase (371 aa).

Residue Lys-228 is modified to N6-(pyridoxal phosphate)lysine.

It belongs to the class-II pyridoxal-phosphate-dependent aminotransferase family. Histidinol-phosphate aminotransferase subfamily. In terms of assembly, homodimer. The cofactor is pyridoxal 5'-phosphate.

It catalyses the reaction L-histidinol phosphate + 2-oxoglutarate = 3-(imidazol-4-yl)-2-oxopropyl phosphate + L-glutamate. Its pathway is amino-acid biosynthesis; L-histidine biosynthesis; L-histidine from 5-phospho-alpha-D-ribose 1-diphosphate: step 7/9. This is Histidinol-phosphate aminotransferase from Thermosynechococcus vestitus (strain NIES-2133 / IAM M-273 / BP-1).